We begin with the raw amino-acid sequence, 3333 residues long: Laminin subunit alpha-3 (3333 aa).

A signal peptide spans 1 to 35 (MAAAARPRGRALGPVLPPTPLLLLVLRVLPACGAT). The region spanning 43-298 (AGLSLHPTYF…SIKDISIGGQ (256 aa)) is the Laminin N-terminal domain. Residues Asn-142 and Asn-242 are each glycosylated (N-linked (GlcNAc...) asparagine). A domain V region spans residues 298–728 (QCVCNGHAEV…NNYYFPDLHH (431 aa)). Cystine bridges form between Cys-299/Cys-308, Cys-301/Cys-319, Cys-321/Cys-330, Cys-333/Cys-353, Cys-356/Cys-365, Cys-358/Cys-390, Cys-393/Cys-402, Cys-405/Cys-423, Cys-426/Cys-436, Cys-428/Cys-443, Cys-445/Cys-454, Cys-457/Cys-467, Cys-491/Cys-503, Cys-493/Cys-509, Cys-511/Cys-520, Cys-523/Cys-533, Cys-536/Cys-548, Cys-538/Cys-555, Cys-557/Cys-566, Cys-569/Cys-586, Cys-601/Cys-610, Cys-613/Cys-628, Cys-631/Cys-645, Cys-633/Cys-652, Cys-654/Cys-663, Cys-666/Cys-681, Cys-684/Cys-696, Cys-686/Cys-703, and Cys-705/Cys-714. Laminin EGF-like domains are found at residues 299-355 (CVCN…ECEA), 356-425 (CNCH…GCIP), 426-469 (CSCD…FCLR), 491-535 (CDCN…ICQA), 536-588 (CWCS…ACDP), 590-630 (GTIN…GCSE), 631-683 (CKCH…GCQG), and 684-728 (CQCD…DLHH). Residues 796 to 1265 (TEAVSGHITI…VAFYHKGALP (470 aa)) form a domain IV 1 (domain IV B) region. 16 disulfides stabilise this stretch: Cys-1266–Cys-1278, Cys-1268–Cys-1285, Cys-1287–Cys-1296, Cys-1299–Cys-1309, Cys-1312–Cys-1319, Cys-1314–Cys-1326, Cys-1328–Cys-1337, Cys-1340–Cys-1353, Cys-1356–Cys-1371, Cys-1358–Cys-1378, Cys-1380–Cys-1389, Cys-1392–Cys-1402, Cys-1405–Cys-1417, Cys-1407–Cys-1424, Cys-1426–Cys-1435, and Cys-1438–Cys-1453. Laminin EGF-like domains are found at residues 1266–1311 (CECH…RCKP), 1312–1355 (CSCG…GCEG), 1356–1404 (CNCS…ECVP), and 1405–1455 (CNCN…GCTS). A domain III B region spans residues 1266 to 1465 (CECHPTGATG…CFCFGVNNQC (200 aa)). Residues 1476 to 1653 (VDMLGWHLET…SGRIALAVEI (178 aa)) enclose the Laminin IV type A domain. The tract at residues 1654-1821 (CACPPAYAGD…DSSPAEECDD (168 aa)) is domain III A. 8 cysteine pairs are disulfide-bonded: Cys-1687–Cys-1696, Cys-1689–Cys-1703, Cys-1706–Cys-1715, Cys-1718–Cys-1731, Cys-1734–Cys-1746, Cys-1736–Cys-1755, Cys-1757–Cys-1766, and Cys-1769–Cys-1784. Laminin EGF-like domains follow at residues 1687 to 1733 (CNCN…SCRA) and 1734 to 1786 (CPCP…SCQP). The Laminin EGF-like 15; truncated domain occupies 1787 to 1821 (CSCNSNGQLGSCHPLTGDCINQEPKDSSPAEECDD). A domain II and I region spans residues 1822-2389 (CDSCVMTLLN…ARDAASKVAV (568 aa)). Coiled-coil stretches lie at residues 1852-1941 (ASAG…KNVI) and 1987-2169 (KHLR…DELV). Residues 2278–2280 (RGD) carry the Cell attachment site motif. Positions 2322–2388 (RTQNEDFKKA…QARDAASKVA (67 aa)) form a coiled coil. N-linked (GlcNAc...) asparagine glycans are attached at residues Asn-2365, Asn-2502, and Asn-2584. Laminin G-like domains are found at residues 2390-2591 (PMRF…VEPC), 2598-2760 (SDKN…TKKC), 2767-2927 (VRSA…LGGC), 2986-3150 (ALQF…VSSC), and 3157-3330 (KGIY…LNGC). Intrachain disulfides connect Cys-2561/Cys-2591, Cys-2737/Cys-2760, Cys-2895/Cys-2927, Cys-3127/Cys-3150, and Cys-3302/Cys-3330.

Laminin is a complex glycoprotein, consisting of three different polypeptide chains (alpha, beta, gamma), which are bound to each other by disulfide bonds into a cross-shaped molecule comprising one long and three short arms with globules at each end. Alpha-3 is a subunit of laminin-5 (laminin-332 or epiligrin/kalinin/nicein), laminin-6 (laminin-311 or K-laminin) and laminin-7 (laminin-321 or KS-laminin). In terms of tissue distribution, skin; respiratory, urinary, and digestive epithelia and in other specialized tissues with prominent secretory or protective functions. Epithelial basement membrane, and epithelial cell tongue that migrates into a wound bed. A differential and focal expression of the subunit alpha-3 is observed in the CNS.

The protein resides in the secreted. It localises to the extracellular space. Its subcellular location is the extracellular matrix. It is found in the basement membrane. Binding to cells via a high affinity receptor, laminin is thought to mediate the attachment, migration and organization of cells into tissues during embryonic development by interacting with other extracellular matrix components. Its function is as follows. Laminin-5 is thought to be involved in (1) cell adhesion via integrin alpha-3/beta-1 in focal adhesion and integrin alpha-6/beta-4 in hemidesmosomes, (2) signal transduction via tyrosine phosphorylation of pp125-FAK and p80, (3) differentiation of keratinocytes. The chain is Laminin subunit alpha-3 (LAMA3) from Homo sapiens (Human).